Reading from the N-terminus, the 238-residue chain is Urease accessory protein UreF (238 aa).

Belongs to the UreF family. UreD, UreF and UreG form a complex that acts as a GTP-hydrolysis-dependent molecular chaperone, activating the urease apoprotein by helping to assemble the nickel containing metallocenter of UreC. The UreE protein probably delivers the nickel.

Its subcellular location is the cytoplasm. Its function is as follows. Required for maturation of urease via the functional incorporation of the urease nickel metallocenter. This is Urease accessory protein UreF from Rhodopseudomonas palustris (strain BisA53).